Reading from the N-terminus, the 307-residue chain is Glutaminase (307 aa).

Substrate contacts are provided by Ser-66, Asn-116, Glu-160, Asn-167, Tyr-191, Tyr-243, and Val-261.

The protein belongs to the glutaminase family. In terms of assembly, homotetramer.

The enzyme catalyses L-glutamine + H2O = L-glutamate + NH4(+). This Pseudoalteromonas translucida (strain TAC 125) protein is Glutaminase.